Here is a 338-residue protein sequence, read N- to C-terminus: MNVYYDKDCDLSIIQAKKVAIIGYGSQGHAHALNLQDSGVDVTVGLRKDSGSWKKAENAGLKVAEVAQAVQAADVVMILTPDEFQKSLYEDVIEPNIKEGATLAFAHGFAIHYNQVVPRKDLDVIMVAPKAPGHTVRSEFVKGGGIPDLIAIYQDASGQAKQVALSYASGVGGGRSGIIETTFKDETETDLFGEQAVLCGGAVELVKMGFETLTEAGYAPEMAYFECLHELKLIVDLMYEGGIADMNYSISNNAEYGEYVTGPEVINEQSREAMRNALKRIQSGEYAKMFITEGATNYPSMTARRRNNADHEIEKTGAKLRSMMPWIGGNKIIDKEKN.

Residues 1-181 (MNVYYDKDCD…GGGRSGIIET (181 aa)) enclose the KARI N-terminal Rossmann domain. NADP(+)-binding positions include 24–27 (YGSQ), Arg-47, Ser-50, Ser-52, and 82–85 (DEFQ). Residue His-107 is part of the active site. Gly-133 contributes to the NADP(+) binding site. The KARI C-terminal knotted domain occupies 182 to 327 (TFKDETETDL…AKLRSMMPWI (146 aa)). The Mg(2+) site is built by Asp-190, Glu-194, Glu-226, and Glu-230. Ser-251 contacts substrate.

The protein belongs to the ketol-acid reductoisomerase family. Mg(2+) serves as cofactor.

It carries out the reaction (2R)-2,3-dihydroxy-3-methylbutanoate + NADP(+) = (2S)-2-acetolactate + NADPH + H(+). The enzyme catalyses (2R,3R)-2,3-dihydroxy-3-methylpentanoate + NADP(+) = (S)-2-ethyl-2-hydroxy-3-oxobutanoate + NADPH + H(+). It functions in the pathway amino-acid biosynthesis; L-isoleucine biosynthesis; L-isoleucine from 2-oxobutanoate: step 2/4. Its pathway is amino-acid biosynthesis; L-valine biosynthesis; L-valine from pyruvate: step 2/4. Involved in the biosynthesis of branched-chain amino acids (BCAA). Catalyzes an alkyl-migration followed by a ketol-acid reduction of (S)-2-acetolactate (S2AL) to yield (R)-2,3-dihydroxy-isovalerate. In the isomerase reaction, S2AL is rearranged via a Mg-dependent methyl migration to produce 3-hydroxy-3-methyl-2-ketobutyrate (HMKB). In the reductase reaction, this 2-ketoacid undergoes a metal-dependent reduction by NADPH to yield (R)-2,3-dihydroxy-isovalerate. In Psychrobacter sp. (strain PRwf-1), this protein is Ketol-acid reductoisomerase (NADP(+)).